A 306-amino-acid chain; its full sequence is Palmitoyl-protein thioesterase ABHD10, mitochondrial (306 aa).

A mitochondrion-targeting transit peptide spans 1 to 52 (MAVARLAAVAAWVPCRSWGCAAVPFGPHRGLSALLARIPQRAPRWLPACRQK). The AB hydrolase-1 domain occupies 78–177 (IIFIPGYLSY…KVVALLGVAT (100 aa)). Catalysis depends on charge relay system residues Ser-152, Asp-249, and His-279.

The protein belongs to the AB hydrolase superfamily.

The protein localises to the mitochondrion. It carries out the reaction S-hexadecanoyl-L-cysteinyl-[protein] + H2O = L-cysteinyl-[protein] + hexadecanoate + H(+). It catalyses the reaction mycophenolic acid O-acyl-beta-D-glucuronide + H2O = mycophenolate + D-glucuronate + H(+). Inhibited by palmostatin-B. Functionally, acts as an acyl-protein thioesterase that hydrolyzes fatty acids from acylated residues in proteins. Regulates the mitochondrial S-depalmitoylation of the nucleophilic active site residue of peroxiredoxin-5/PRDX5, a key antioxidant protein, therefore modulating mitochondrial antioxidant ability. Also catalyzes the deglucuronidation of mycophenolic acid acyl-glucuronide, an active metabolite of the immunosuppressant drug mycophenolate. The protein is Palmitoyl-protein thioesterase ABHD10, mitochondrial (ABHD10) of Pongo abelii (Sumatran orangutan).